The sequence spans 357 residues: Cyclic AMP-responsive element-binding protein 5 (357 aa).

The segment at 114–239 (RQDQTPHHHL…FLERNRAAAT (126 aa)) is disordered. 2 stretches are compositionally biased toward basic residues: residues 120 to 129 (HHHLHSHPHQ) and 138 to 175 (PYPH…HPAH). Polar residues predominate over residues 186–195 (TGNQAQVSPA). Over residues 196-206 (TQQMQPTQTIQ) the composition is skewed to low complexity. Residues 218-235 (VVDEDPDERRRKFLERNR) are compositionally biased toward basic and acidic residues. The region spanning 224–287 (DERRRKFLER…AQLKQLLLTH (64 aa)) is the bZIP domain. The segment at 226-246 (RRRKFLERNRAAATRCRQKRK) is basic motif. The segment at 252–280 (LEKKAEELTQTNMQLQNEVSMLKNEVAQL) is leucine-zipper. Residues 298–318 (ESQGYLSPESSPPASPVPACS) form a disordered region.

The protein belongs to the bZIP family. Binds DNA as a homodimer or as a heterodimer with JUN or ATF2/CREBP1.

The protein resides in the nucleus. In terms of biological role, binds to the cAMP response element and activates transcription. This chain is Cyclic AMP-responsive element-binding protein 5 (Creb5), found in Mus musculus (Mouse).